A 101-amino-acid polypeptide reads, in one-letter code: Protein S100-A7-like 2 (101 aa).

EF-hand domains follow at residues 13–48 and 50–85; these read IVAM…SGCE and SDMD…ITID. Residues Asp63, Asn65, Asp67, Lys69, and Glu74 each contribute to the Ca(2+) site. The Zn(2+) site is built by His87 and His91.

This sequence belongs to the S-100 family.

This is Protein S100-A7-like 2 (S100A7L2) from Homo sapiens (Human).